A 1270-amino-acid chain; its full sequence is MDSLEEPQKKVFKARKTMRVSDRQQLEAVYKVKEELLKTDVKLLNGNHENGDLDPTSPLENMDYIKDKEEVNGIEEICFDPEGSKAEWKETPCILSVNVKNKQDDDLNCEPLSPHNITPEPVSKLPAEPVSGDPAPGDLDAGDPASGVLASGDSTSGDPTSSEPSSSDAASGDATSGDAPSGDVSPGDATSGDATADDLSSGDPTSSDPIPGEPVPVEPISGDCAADDIASSEITSVDLASGAPASTDPASDDLASGDLSSSELASDDLATGELASDELTSESTFDRTFEPKSVPVCEPVPEIDNIEPSSNKDDDFLEKNGADEKLEQIQSKDSLDEKNKADNNIDANEETLETDDTTICSDRPPENEKKVEEDIITELALGEDAISSSMEIDQGEKNEDETSADLVETINENVIEDNKSENILENTDSMETDEIIPILEKLAPSEDELTCFSKTSLLPIDETNPDLEEKMESSFGSPSKQESSESLPKEAFLVLSDEEDISGEKDESEVISQNETCSPAEVESNEKDNKPEEEEQVIHEDDERPSEKNEFSRRKRSKSEDMDNVQSKRRRYMEEEYEAEFQVKITAKGDINQKLQKVIQWLLEEKLCALQCAVFDKTLAELKTRVEKIECNKRHKTVLTELQAKIARLTKRFEAAKEDLKKRHEHPPNPPVSPGKTVNDVNSNNNMSYRNAGTVRQMLESKRNVSESAPPSFQTPVNTVSSTNLVTPPAVVSSQPKLQTPVTSGSLTATSVLPAPNTATVVATTQVPSGNPQPTISLQPLPVILHVPVAVSSQPQLLQSHPGTLVTNQPSGNVEFISVQSPPTVSGLTKNPVSLPSLPNPTKPNNVPSVPSPSIQRNPTASAAPLGTTLAVQAVPTAHSIVQATRTSLPTVGPSGLYSPSTNRGPIQMKIPISAFSTSSAAEQNSNTTPRIENQTNKTIDASVSKKAADSTSQCGKATGSDSSGVIDLTMDDEESGASQDPKKLNHTPVSTMSSSQPVSRPLQPIQPAPPLQPSGVPTSGPSQTTIHLLPTAPTTVNVTHRPVTQVTTRLPVPRAPANHQVVYTTLPAPPAQAPLRGTVMQAPAVRQVNPQNSVTVRVPQTTTYVVNNGLTLGSTGPQLTVHHRPPQVHTEPPRPVHPAPLPEAPQPQRLPPEAASTSLPQKPHLKLARVQSQNGIVLSWSVLEVDRSCATVDSYHLYAYHEEPSATVPSQWKKIGEVKALPLPMACTLTQFVSGSKYYFAVRAKDIYGRFGPFCDPQSTDVISSTQSS.

Position 1 is an N-acetylmethionine (Met1). Lys33 is covalently cross-linked (Glycyl lysine isopeptide (Lys-Gly) (interchain with G-Cter in SUMO2)). Residues Ser57 and Ser113 each carry the phosphoserine modification. Disordered regions lie at residues 104–223 (DDDL…ISGD) and 235–402 (TSVD…EDET). Thr118 carries the post-translational modification Phosphothreonine. Low complexity-rich tracts occupy residues 132-203 (GDPA…SSGD) and 248-269 (DPASDDLASGDLSSSELASDDL). Composition is skewed to basic and acidic residues over residues 310-327 (SNKDDDFLEKNGADEKLE) and 333-343 (DSLDEKNKADN). Positions 347–356 (ANEETLETDD) are enriched in acidic residues. Residues 363–373 (RPPENEKKVEE) are compositionally biased toward basic and acidic residues. Ser445, Ser473, Ser474, Ser477, Ser479, and Ser496 each carry phosphoserine. 4 disordered regions span residues 455–570 (TSLL…SKRR), 658–685 (EDLKKRHEHPPNPPVSPGKTVNDVNSNN), 822–862 (PPTV…PTAS), and 886–906 (RTSLPTVGPSGLYSPSTNRGP). Residues 474–486 (SFGSPSKQESSES) are compositionally biased toward polar residues. The segment covering 496 to 509 (SDEEDISGEKDESE) has biased composition (acidic residues). Residues 524-552 (SNEKDNKPEEEEQVIHEDDERPSEKNEFS) show a composition bias toward basic and acidic residues. The Nuclear localization signal signature appears at 553–571 (RRKRSKSEDMDNVQSKRRR). Lys558 is covalently cross-linked (Glycyl lysine isopeptide (Lys-Gly) (interchain with G-Cter in SUMO2)). Residue Ser559 is modified to Phosphoserine. The segment at 562–817 (MDNVQSKRRR…NQPSGNVEFI (256 aa)) is interaction with SETDB1. Residues 617–665 (KTLAELKTRVEKIECNKRHKTVLTELQAKIARLTKRFEAAKEDLKKRHE) are a coiled coil. Residue Ser673 is modified to Phosphoserine. The span at 822–834 (PPTVSGLTKNPVS) shows a compositional bias: polar residues. The segment covering 843–854 (KPNNVPSVPSPS) has biased composition (low complexity). Phosphoserine is present on Ser899. Glycyl lysine isopeptide (Lys-Gly) (interchain with G-Cter in SUMO2) cross-links involve residues Lys910 and Lys938. 2 stretches are compositionally biased toward polar residues: residues 918 to 942 (TSSAAEQNSNTTPRIENQTNKTIDA) and 950 to 964 (DSTSQCGKATGSDSS). Disordered stretches follow at residues 918–1026 (TSSA…SQTT) and 1115–1160 (STGP…STSL). An interaction with SUMO region spans residues 965–975 (GVIDLTMDDEE). 2 stretches are compositionally biased toward polar residues: residues 988–999 (TPVSTMSSSQPV) and 1016–1026 (GVPTSGPSQTT). Pro residues predominate over residues 1134-1151 (PRPVHPAPLPEAPQPQRL). The segment at 1154–1270 (EAASTSLPQK…TDVISSTQSS (117 aa)) is interaction with MBD1. In terms of domain architecture, Fibronectin type-III spans 1160–1270 (LPQKPHLKLA…TDVISSTQSS (111 aa)).

Belongs to the MCAF family. Interacts with MBD1; the interaction is enhanced when MBD1 is sumoylated. Interacts with SETDB1; the interaction protects SETDB1 from proteasomal degradation and is required to stimulate histone methyltransferase activity and facilitate the conversion of dimethylated to trimethylated H3 'Lys-9'. Interacts with SUMO ubiquitin-like proteins (SUMO1, SUNO2 and SUMO3), with a preference for SUMO2 and SUMO3. Interacts with SP1, ATF7 and ZHX1. Interacts with the general transcription machinery, including ERCC2, ERCC3, GTF2E1, GTF2E2 and POLR2A. As to quaternary structure, (Microbial infection) Interacts with Epstein-Barr virus BRLF1/Rta protein, leading to the regulation of host genes in Epstein-Barr virus-infected cells. As to expression, detected at low levels in breast, lung and stomach; highly up-regulated in the corresponding cancerous tissues (at protein level).

Its subcellular location is the nucleus. Its function is as follows. Recruiter that couples transcriptional factors to general transcription apparatus and thereby modulates transcription regulation and chromatin formation. Can both act as an activator or a repressor depending on the context. Required for HUSH-mediated heterochromatin formation and gene silencing. Mediates MBD1-dependent transcriptional repression, probably by recruiting complexes containing SETDB1. Stabilizes SETDB1, is required to stimulate histone methyltransferase activity of SETDB1 and facilitates the conversion of dimethylated to trimethylated H3 'Lys-9' (H3K9me3). The complex formed with MBD1 and SETDB1 represses transcription and couples DNA methylation and histone H3 'Lys-9' trimethylation (H3K9me3). Facilitates telomerase TERT and TERC gene expression by SP1 in cancer cells. The polypeptide is Activating transcription factor 7-interacting protein 1 (Homo sapiens (Human)).